Reading from the N-terminus, the 474-residue chain is 15-cis-phytoene desaturase (474 aa).

It belongs to the carotenoid/retinoid oxidoreductase family.

It localises to the cell membrane. The enzyme catalyses 2 a plastoquinone + 15-cis-phytoene = 9,9',15-tri-cis-zeta-carotene + 2 a plastoquinol. Its pathway is carotenoid biosynthesis; lycopene biosynthesis. With respect to regulation, inhibited by the herbicide norflurazon in a non-competitive way. This enzyme converts phytoene into zeta-carotene via the intermediary of phytofluene by the symmetrical introduction of two double bonds at the C-11 and C-11' positions of phytoene. Also active with phytofluene and 1,2-epoxyphytoene as substrates. In Synechococcus elongatus (strain ATCC 33912 / PCC 7942 / FACHB-805) (Anacystis nidulans R2), this protein is 15-cis-phytoene desaturase (pds).